The sequence spans 293 residues: Mitochondrial glycine transporter (293 aa).

3 Solcar repeats span residues 6–85 (GGVP…SRSA), 102–186 (LQSY…AKEM), and 208–291 (ASAM…LLKL). 6 consecutive transmembrane segments (helical) span residues 12-37 (LVSGFFGGLASVCALQPLDLLKTRLQ), 60-86 (GTLPSALRTSIGSALYLSLLNYSRSAL), 108-133 (LLTGALSRAAVGLVTMPITVIKVRYE), 161-184 (GAAATTLRDAPYAGLYVLLYEQAK), 212-238 (VNGVSAFLSASLATTLTAPFDTIKTRM), and 266-284 (GLSLRLCRKAMSACIAWGI).

It belongs to the mitochondrial carrier (TC 2.A.29) family. SLC25A38 subfamily.

It localises to the mitochondrion inner membrane. The enzyme catalyses glycine(in) = glycine(out). In terms of biological role, mitochondrial glycine transporter that imports glycine into the mitochondrial matrix. Plays an important role in providing glycine for the first enzymatic step in heme biosynthesis, the condensation of glycine with succinyl-CoA to produce 5-aminolevulinate (ALA) in the mitochondrial matrix. The chain is Mitochondrial glycine transporter from Eremothecium gossypii (strain ATCC 10895 / CBS 109.51 / FGSC 9923 / NRRL Y-1056) (Yeast).